The sequence spans 596 residues: ATP-dependent RNA helicase dbp3 (596 aa).

The span at 1 to 17 (MPKRTLEDTELNPRDNY) shows a compositional bias: basic and acidic residues. Disordered regions lie at residues 1–87 (MPKR…ESTS) and 115–139 (EEKVDIPESTDSATPISVAPQQNGT). Basic residues predominate over residues 21–30 (SSKKSRKEKR). The stretch at 47-120 (IDIEVESKEA…KEGKEEKVDI (74 aa)) forms a coiled coil. Residues 123–139 (STDSATPISVAPQQNGT) are compositionally biased toward polar residues. A Q motif motif is present at residues 180–207 (IKFDYLPITDSAQRAPFKDFKAPTPIQA). One can recognise a Helicase ATP-binding domain in the interval 210 to 386 (WPFLLAGRDV…STFMTSPVKI (177 aa)). 223–230 (AETGSGKT) is an ATP binding site. Positions 332–335 (DEAD) match the DEAD box motif. A Helicase C-terminal domain is found at 417 to 566 (RLMQLLKQYQ…PVPDELLKFG (150 aa)).

This sequence belongs to the DEAD box helicase family. DDX5/DBP2 subfamily.

It is found in the nucleus. The protein resides in the nucleolus. The enzyme catalyses ATP + H2O = ADP + phosphate + H(+). ATP-dependent RNA helicase required for 60S ribosomal subunit synthesis. Involved in efficient pre-rRNA processing, predominantly at site A3, which is necessary for the normal formation of 25S and 5.8S rRNAs. The sequence is that of ATP-dependent RNA helicase dbp3 (dbp3) from Sclerotinia sclerotiorum (strain ATCC 18683 / 1980 / Ss-1) (White mold).